A 216-amino-acid polypeptide reads, in one-letter code: 3-isopropylmalate dehydratase small subunit (216 aa).

The protein belongs to the LeuD family. LeuD type 1 subfamily. As to quaternary structure, heterodimer of LeuC and LeuD.

It carries out the reaction (2R,3S)-3-isopropylmalate = (2S)-2-isopropylmalate. Its pathway is amino-acid biosynthesis; L-leucine biosynthesis; L-leucine from 3-methyl-2-oxobutanoate: step 2/4. Catalyzes the isomerization between 2-isopropylmalate and 3-isopropylmalate, via the formation of 2-isopropylmaleate. This Acidovorax ebreus (strain TPSY) (Diaphorobacter sp. (strain TPSY)) protein is 3-isopropylmalate dehydratase small subunit.